The following is a 55-amino-acid chain: Lantibiotic epilancin 15X (55 aa).

Positions 1 to 24 (MKKELFDLNLNKDIEAQKSDLNPQ) are cleaved as a propeptide — cleaved by ElxP. Ser25 carries the post-translational modification D-lactate; by the dehydratase ElxB and the dehydrogenase ElxO. Ser27 is subject to 2,3-didehydroalanine (Ser); by the dehydratase ElxB. 2,3-didehydrobutyrine; by the dehydratase ElxB is present on residues Thr31 and Thr32. Residues 36–40 (SKKLC) constitute a cross-link (lanthionine (Ser-Cys); by the dehydratase ElxB and the cyclase ElxC). Cross-links (beta-methyllanthionine (Thr-Cys); by the dehydratase ElxB and the cyclase ElxC) lie at residues 44 to 47 (TLTC) and 46 to 49 (TCGC). Thr52 carries the post-translational modification 2,3-didehydrobutyrine; by the dehydratase ElxB.

In terms of processing, maturation of this lantibiotic involves the enzymatic conversion of Thr, and Ser into dehydrated AA by ElxB and the formation of thioether bonds with cysteine by the cyclase ElxC. The next steps are cleavage of the leader peptide by ElxP and membrane translocation by ElxT. The leader peptide may be removed before membrane translocation, in contrast to other lantibiotics for which the cleavage occur after translocation. This is suggested by the probable cytoplasmic localization of the serine protease ElxP that cleaves the leader peptide. The N-terminal D-lactate is probably produced by dehydration of Ser-25 by ElxB, followed by proteolytic removal of the leader peptide by the serine protease ElxP and hydrolysis of the resulting new N-terminal dehydroalanine. This hydrolysis may occur spontaneously. The pyruvate group thus formed is reduced to D-lactate by the NADPH-dependent oxidoreductase ElxO. This N-terminal D-lactate protects the lantibiotic against degradation against aminopeptidase. Post-translationally, it is not established whether the 2,3-didehydrobutyrines are the E- or Z-isomers.

In terms of biological role, lanthionine-containing peptide antibiotic (lantibiotic) active on Gram-positive bacteria such as staphylococci, enterococci and streptococci. The bactericidal activity of lantibiotics is based on depolarization of energized bacterial cytoplasmic membranes, initiated by the formation of aqueous transmembrane pores. This chain is Lantibiotic epilancin 15X, found in Staphylococcus epidermidis.